We begin with the raw amino-acid sequence, 336 residues long: Dihydroorotate dehydrogenase (quinone) (336 aa).

FMN-binding positions include 62–66 and T86; that span reads AGLDK. Residue K66 participates in substrate binding. A substrate-binding site is contributed by 111–115; it reads NRMGF. Residues N139 and N172 each contribute to the FMN site. A substrate-binding site is contributed by N172. The Nucleophile role is filled by S175. N177 serves as a coordination point for substrate. Residues K217 and T245 each contribute to the FMN site. 246–247 lines the substrate pocket; that stretch reads NT. Residues G268, G297, and 318–319 contribute to the FMN site; that span reads YS.

Belongs to the dihydroorotate dehydrogenase family. Type 2 subfamily. Monomer. FMN serves as cofactor.

It is found in the cell membrane. The catalysed reaction is (S)-dihydroorotate + a quinone = orotate + a quinol. The protein operates within pyrimidine metabolism; UMP biosynthesis via de novo pathway; orotate from (S)-dihydroorotate (quinone route): step 1/1. Catalyzes the conversion of dihydroorotate to orotate with quinone as electron acceptor. This Citrobacter koseri (strain ATCC BAA-895 / CDC 4225-83 / SGSC4696) protein is Dihydroorotate dehydrogenase (quinone).